The primary structure comprises 563 residues: Mitochondrial distribution and morphology protein 34 (563 aa).

Residues 1–195 (MAFNFNWSPL…LPAIIHRLSL (195 aa)) form the SMP-LTD domain. Disordered regions lie at residues 298–499 (ERGD…PHTP) and 531–563 (ARRQ…PKAL). Polar residues-rich tracts occupy residues 303–332 (AGTT…FSNR) and 346–357 (SLVNMNSATTGL). Over residues 365-383 (SRSHPTRKKKNRVVNLRKP) the composition is skewed to basic residues. Positions 386-407 (TESSESGESETASTTAVSEPTV) are enriched in low complexity. Composition is skewed to polar residues over residues 458–471 (PSLT…INTQ) and 478–488 (YNQSASTSYTP). Over residues 531–540 (ARRQHDDKTA) the composition is skewed to basic and acidic residues.

Belongs to the MDM34 family. As to quaternary structure, component of the ER-mitochondria encounter structure (ERMES) or MDM complex, composed of MMM1, MDM10, MDM12 and MDM34.

Its subcellular location is the mitochondrion outer membrane. Component of the ERMES/MDM complex, which serves as a molecular tether to connect the endoplasmic reticulum (ER) and mitochondria. Components of this complex are involved in the control of mitochondrial shape and protein biogenesis, and function in nonvesicular lipid trafficking between the ER and mitochondria. MDM34 is required for the interaction of the ER-resident membrane protein MMM1 and the outer mitochondrial membrane-resident beta-barrel protein MDM10. The sequence is that of Mitochondrial distribution and morphology protein 34 from Botryotinia fuckeliana (strain B05.10) (Noble rot fungus).